A 127-amino-acid chain; its full sequence is Large ribosomal subunit protein bL19 (127 aa).

The protein belongs to the bacterial ribosomal protein bL19 family.

Functionally, this protein is located at the 30S-50S ribosomal subunit interface and may play a role in the structure and function of the aminoacyl-tRNA binding site. In Trichodesmium erythraeum (strain IMS101), this protein is Large ribosomal subunit protein bL19.